The following is a 103-amino-acid chain: Histone H4.2 (103 aa).

Residues 1–14 (MTGRGKGGKGLGKG) show a composition bias toward gly residues. The interval 1-20 (MTGRGKGGKGLGKGGAKRHR) is disordered. Lys-6 is subject to N6-acetyl-N6-methyllysine; alternate. 3 positions are modified to N6-methyllysine; alternate: Lys-6, Lys-9, and Lys-13. Lys-13 carries the N6-acetyl-N6-methyllysine; alternate modification. A DNA-binding region spans residues 17 to 21 (KRHRK). Residue Lys-92 is modified to N6-glutaryllysine.

This sequence belongs to the histone H4 family. The nucleosome is a histone octamer containing two molecules each of H2A, H2B, H3 and H4 assembled in one H3-H4 heterotetramer and two H2A-H2B heterodimers. The octamer wraps approximately 147 bp of DNA. Post-translationally, glutarylation at Lys-92 (H4K91glu) destabilizes nucleosomes by promoting dissociation of the H2A-H2B dimers from nucleosomes.

It localises to the nucleus. The protein localises to the chromosome. Core component of nucleosome. Nucleosomes wrap and compact DNA into chromatin, limiting DNA accessibility to the cellular machineries which require DNA as a template. Histones thereby play a central role in transcription regulation, DNA repair, DNA replication and chromosomal stability. DNA accessibility is regulated via a complex set of post-translational modifications of histones, also called histone code, and nucleosome remodeling. In Talaromyces funiculosus (Fruitlet core rot fungus), this protein is Histone H4.2 (H4.2).